A 702-amino-acid chain; its full sequence is Elongation factor G (702 aa).

One can recognise a tr-type G domain in the interval 8 to 290 (TRYRNIGISA…AVIEYLPAPT (283 aa)). Residues 17–24 (AHIDAGKT), 88–92 (DTPGH), and 142–145 (NKMD) contribute to the GTP site.

It belongs to the TRAFAC class translation factor GTPase superfamily. Classic translation factor GTPase family. EF-G/EF-2 subfamily.

It localises to the cytoplasm. In terms of biological role, catalyzes the GTP-dependent ribosomal translocation step during translation elongation. During this step, the ribosome changes from the pre-translocational (PRE) to the post-translocational (POST) state as the newly formed A-site-bound peptidyl-tRNA and P-site-bound deacylated tRNA move to the P and E sites, respectively. Catalyzes the coordinated movement of the two tRNA molecules, the mRNA and conformational changes in the ribosome. This Erwinia tasmaniensis (strain DSM 17950 / CFBP 7177 / CIP 109463 / NCPPB 4357 / Et1/99) protein is Elongation factor G.